We begin with the raw amino-acid sequence, 401 residues long: Enoyl-[acyl-carrier-protein] reductase [NADH] 1 (401 aa).

NAD(+) is bound by residues 48–53 (GSSSGY), 74–75 (FE), 111–112 (DA), and 139–140 (LA). Residue Tyr-225 coordinates substrate. Tyr-235 serves as the catalytic Proton donor. NAD(+)-binding positions include Lys-244 and 273–275 (VVT).

It belongs to the TER reductase family. In terms of assembly, monomer.

The enzyme catalyses a 2,3-saturated acyl-[ACP] + NAD(+) = a (2E)-enoyl-[ACP] + NADH + H(+). The catalysed reaction is a 2,3-saturated acyl-CoA + NAD(+) = a (2E)-enoyl-CoA + NADH + H(+). It catalyses the reaction (2E)-butenoyl-[ACP] + NADH + H(+) = butanoyl-[ACP] + NAD(+). It carries out the reaction butanoyl-CoA + NAD(+) = (2E)-butenoyl-CoA + NADH + H(+). It participates in lipid metabolism; fatty acid biosynthesis. Its activity is regulated as follows. Weakly inhibited by triclosan. Involved in the final reduction of the elongation cycle of fatty acid synthesis (FAS II). Catalyzes the NADH-dependent reduction of a carbon-carbon double bond in an enoyl moiety that is covalently linked to an acyl carrier protein (ACP). It can use both crotonyl-CoA and crotonyl-ACP. This is Enoyl-[acyl-carrier-protein] reductase [NADH] 1 from Vibrio cholerae serotype O1 (strain ATCC 39315 / El Tor Inaba N16961).